Consider the following 1358-residue polypeptide: Insulin-like growth factor 1 receptor (1358 aa).

An N-terminal signal peptide occupies residues 1–25 (MKAELVPVCTAWILGLLLCLGPAAA). C28 and C47 are oxidised to a cystine. N74, N99, and N132 each carry an N-linked (GlcNAc...) asparagine glycan. 13 cysteine pairs are disulfide-bonded: C147-C175, C179-C202, C189-C208, C212-C221, C216-C227, C228-C236, C232-C245, C248-C257, C261-C273, C279-C299, C303-C317, C320-C324, and C328-C347. The N-linked (GlcNAc...) asparagine glycan is linked to N241. An N-linked (GlcNAc...) asparagine glycan is attached at N310. N-linked (GlcNAc...) asparagine glycosylation is found at N411 and N432. C449 and C482 are joined by a disulfide. Fibronectin type-III domains follow at residues 483–603 (ESHV…TDAA), 604–702 (VPSI…TEAE), 727–818 (PRPN…FVFA), and 829–924 (IPGI…LKPD). Residues N488, N528, N616, N634, and N669 are each glycosylated (N-linked (GlcNAc...) asparagine). The tract at residues 670 to 691 (GTIDTEGGTEPTKPEGSVGEKG) is disordered. Topologically, residues 735–934 (DVLAVGNSTV…VRNNILQMVV (200 aa)) are extracellular. N-linked (GlcNAc...) asparagine glycosylation is found at N741, N750, N758, N895, and N908. Residues 935-955 (AIPLALSFLLVGIISIVCFVF) traverse the membrane as a helical segment. Topologically, residues 956-1358 (KKRNSNRLGN…ALPLPQSSAC (403 aa)) are cytoplasmic. Y976 carries the phosphotyrosine; by autocatalysis modification. Positions 995-1270 (ITMNRELGQG…SIKDELDPGF (276 aa)) constitute a Protein kinase domain. Residues 1001–1009 (LGQGSFGMV) and K1029 each bind ATP. D1131 serves as the catalytic Proton acceptor. Phosphotyrosine; by autocatalysis is present on residues Y1157, Y1161, and Y1162. The disordered stretch occupies residues 1336–1358 (PYAHMNGGRKNERALPLPQSSAC).

It belongs to the protein kinase superfamily. Tyr protein kinase family. Insulin receptor subfamily. As to quaternary structure, tetramer of 2 alpha and 2 beta chains linked by disulfide bonds. The alpha chains contribute to the formation of the ligand-binding domain, while the beta chain carries the kinase domain. It depends on Mn(2+) as a cofactor. The cytoplasmic domain of the beta subunit is autophosphorylated on Tyr residues in response to low concentrations of insulin-like growth factor (IGF1) and higher concentrations of insulin.

The protein localises to the cell membrane. The enzyme catalyses L-tyrosyl-[protein] + ATP = O-phospho-L-tyrosyl-[protein] + ADP + H(+). Its activity is regulated as follows. Autophosphorylation activates the kinase activity. Its function is as follows. This receptor binds insulin-like growth factor 1 (IGF1) with a high affinity and IGF2 with a lower affinity. It has a tyrosine-protein kinase activity, which is necessary for the activation of the IGF1-stimulated downstream signaling cascade. Plays a role in oocyte maturation. Promotes head development by inhibiting Wnt signaling during embryogenesis. This chain is Insulin-like growth factor 1 receptor (igf1r), found in Xenopus laevis (African clawed frog).